Reading from the N-terminus, the 139-residue chain is Putative pre-16S rRNA nuclease (139 aa).

This sequence belongs to the YqgF nuclease family.

Its subcellular location is the cytoplasm. Could be a nuclease involved in processing of the 5'-end of pre-16S rRNA. The chain is Putative pre-16S rRNA nuclease from Rippkaea orientalis (strain PCC 8801 / RF-1) (Cyanothece sp. (strain PCC 8801)).